The chain runs to 103 residues: Small ribosomal subunit protein uS10 (103 aa).

Belongs to the universal ribosomal protein uS10 family. As to quaternary structure, part of the 30S ribosomal subunit.

Its function is as follows. Involved in the binding of tRNA to the ribosomes. The sequence is that of Small ribosomal subunit protein uS10 from Polynucleobacter asymbioticus (strain DSM 18221 / CIP 109841 / QLW-P1DMWA-1) (Polynucleobacter necessarius subsp. asymbioticus).